A 390-amino-acid chain; its full sequence is Putative methylesterase 11, chloroplastic (390 aa).

The transit peptide at 1–46 (MGNLCSLFTPPKPVKKRKPITKRQSSIGASSSGSGLNSNRWNNRVR) directs the protein to the chloroplast. Disordered regions lie at residues 1–52 (MGNL…SSRR) and 94–119 (QGSCSKKNQLPRSSSSRSRSSTDPLL). Residues 25-48 (SSIGASSSGSGLNSNRWNNRVRSS) show a composition bias toward low complexity. The span at 94 to 104 (QGSCSKKNQLP) shows a compositional bias: polar residues. A compositionally biased stretch (low complexity) spans 105-114 (RSSSSRSRSS). The 105-residue stretch at 137 to 241 (NHFVLVHGGS…KAVFLAAAML (105 aa)) folds into the AB hydrolase-1 domain. The active-site Acyl-ester intermediate is the Asp-213. Residues Asp-339 and His-367 each act as charge relay system in the active site.

This sequence belongs to the AB hydrolase superfamily. Methylesterase family.

It localises to the plastid. The protein localises to the chloroplast. Putative methylesterase. This chain is Putative methylesterase 11, chloroplastic, found in Arabidopsis thaliana (Mouse-ear cress).